A 257-amino-acid chain; its full sequence is AN1-type zinc finger protein 2B (257 aa).

2 consecutive AN1-type zinc fingers follow at residues 4-52 (PDLG…QKDI) and 94-142 (KIFT…HQTS). Residues C10, C15, C25, C28, C33, H36, H42, C44, C100, C105, C115, C118, C123, H126, H132, and C134 each contribute to the Zn(2+) site. The tract at residues 141-151 (TSRAGLAAISR) is VCP/p97-interacting motif (VIM). Positions 152–184 (AQGLASTSTAPSPSRTLPSSSSPSRATPQLPTR) are disordered. A compositionally biased stretch (low complexity) spans 155-179 (LASTSTAPSPSRTLPSSSSPSRATP). S163, S173, and S187 each carry phosphoserine; by MAPK14. 2 UIM domains span residues 197–216 (SEDEALQRALELSLAEAKPQ) and 221–240 (QEEDDLALAQALSASEAEYQ). The residue at position 254 (C254) is a Cysteine methyl ester. The S-geranylgeranyl cysteine moiety is linked to residue C254. A CAAX motif motif is present at residues 254 to 257 (CSLC). Residues 255–257 (SLC) constitute a propeptide, removed in mature form.

Binds 'Lys-48'-linked polyubiquitin chains of ubiquitinated proteins. Associates with the proteasome complex; upon exposure to arsenite. Interacts (via VIM motif) with VCP; the interaction is direct. Interacts with BAG6. Interacts with IGF1R (nascent precursor form). Interacts with DERL1, FAF2, NPLOC4 and UFD1; probably through VCP. In terms of processing, phosphorylated by MAPK14. Phosphorylation has no effect on association with the proteasome complex.

The protein localises to the endoplasmic reticulum membrane. Its function is as follows. Plays a role in protein homeostasis by regulating both the translocation and the ubiquitin-mediated proteasomal degradation of nascent proteins at the endoplasmic reticulum. It is involved in the regulation of signal-mediated translocation of proteins into the endoplasmic reticulum. It also plays a role in the ubiquitin-mediated proteasomal degradation of proteins for which signal-mediated translocation to the endoplasmic reticulum has failed. May therefore function in the endoplasmic reticulum stress-induced pre-emptive quality control, a mechanism that selectively attenuates the translocation of newly synthesized proteins into the endoplasmic reticulum and reroutes them to the cytosol for proteasomal degradation. By controlling the steady-state expression of the IGF1R receptor, indirectly regulates the insulin-like growth factor receptor signaling pathway. The polypeptide is AN1-type zinc finger protein 2B (Mus musculus (Mouse)).